The following is a 274-amino-acid chain: NADPH-dependent 7-cyano-7-deazaguanine reductase (274 aa).

Residue 80-82 (VES) coordinates substrate. 82–83 (SK) contacts NADPH. Cysteine 181 acts as the Thioimide intermediate in catalysis. The Proton donor role is filled by aspartate 188. 220–221 (HE) is a substrate binding site. 249 to 250 (RG) contacts NADPH.

This sequence belongs to the GTP cyclohydrolase I family. QueF type 2 subfamily. Homodimer.

Its subcellular location is the cytoplasm. The catalysed reaction is 7-aminomethyl-7-carbaguanine + 2 NADP(+) = 7-cyano-7-deazaguanine + 2 NADPH + 3 H(+). It participates in tRNA modification; tRNA-queuosine biosynthesis. Catalyzes the NADPH-dependent reduction of 7-cyano-7-deazaguanine (preQ0) to 7-aminomethyl-7-deazaguanine (preQ1). In Paraburkholderia phytofirmans (strain DSM 17436 / LMG 22146 / PsJN) (Burkholderia phytofirmans), this protein is NADPH-dependent 7-cyano-7-deazaguanine reductase.